The chain runs to 150 residues: Galactose-binding lectin (150 aa).

His-16 and Gly-19 together coordinate D-galactose. N-linked (GlcNAc...) asparagine glycosylation occurs at Asn-26. D-galactose contacts are provided by residues Asn-27, 35-37 (DIH), His-64, and Gly-67. Residue Asn-74 is glycosylated (N-linked (GlcNAc...) asparagine). D-galactose-binding positions include Glu-75, 83–85 (DRH), His-108, and Gly-111. Asn-118 is a glycosylation site (N-linked (GlcNAc...) asparagine). D-galactose is bound by residues Asn-119 and 127–129 (DKH).

As to quaternary structure, monomer in solution. Homodimer in solution. Exists as a monomer in solution when a low concentration (0.001 mg/ml) of it is present. Homodimers start to appear at a concentration of 0.01 mg/ml and tetramers at a concentration of 0.1 mg/ml. In terms of tissue distribution, highly expressed in mantle and to a lesser extent in muscle, hepatopancreas, gill and hemocytes.

Bacterial binding activity is inhibited by D-galactose. Hemagglutinating activity is independent of divalent cations Ca2(+) or Mg2(+). It is strongly inhibited by N-acetyl-D-galactosamine (GalNAc), D-galactose and D-talose, and to a lesser extent by melibiose and raffinose. Also inhibited by glycoprotein asialo-bovine submaxillary mucin (BSM). Not inhibited by D-glucose, D-fucose, D-galactitol, N-acetyl-D-glucosamine or lactose. Fungal binding activity is inhibited by D-galactose. Cytotoxic activity against Raji cell line is completely inhibited by galactose, melibiose and raffinose, but not by glucose or lactose. Galactose inhibits binding to laminin and BSM, but not to collagen, gelatin or fibronectin. In terms of biological role, galactose-binding lectin. Binds both alpha and beta anomer of galactose (Gal), but has a stronger interaction with the glycans having alpha Gal at the non-reducing end and binds beta Gal weakly only in highly branched glycans. Has high affinity to Galalpha1-4Galbeta1-4GlcNAc. Binds N-acetyl-2-deoxy-2-amino-galactose (2-deoxy-GalNAc). Binds N-acetylgalactosamine (GalNAc). Binds porcine stomach mucin (PSM) with high affinity. Binds galactosamine. Binds laminin, bovine submaxillary mucin (BSM), fibronectin, type I collagen and gelatin with a decreasing affinity, respectively. Has hemagglutinating activity towards human type A erythrocytes. Also hemagglutinates human type 0, B and AB erythrocytes as well as rabbit and mouse erythrocytes. Agglutinates both Gram-positive and Gram-negative bacteria including B.subtilis ATCC 6633, S.aureus ATCC 21027 and E.coli 3254, respectively. No agglutination activity towards Gram-positive S.amurskyense CMM 3673. Has bacteriostatic activity on S.amurskyense CMM 3673, B.subtilis ATCC 6633, S.aureus ATCC 21027 and E.coli 3254. However, has no agglutination nor bacteriostatic activity on Gram-negative C.scophthalmum CIP 104199 or A.troitsensis KMM 3674. Inhibits growth of fungi from the genera Aspergillus, Penicillium, Trichoderma and st. Mycelia. Inhibits germination of spores and hyphal growth of them. Has dose-dependent cytotoxic effect on the human globotriaosylceramide (Gb3)-expressing Burkitt's lymphoma (Raji) cell line. Binds to Gb3 in these cells leading to activation of caspase-9/3 and PARP. Has dose-dependent cytotoxic effect on the Gb3-expressing human MCF-7 breast cancer cell line. No cytotoxic effect on myelogenous leukemia K562 cell line, which does not express Gb3. Activates immune responses in mice and increases cytokine production of TNF-alpha, IL-6 and MCP-1 in the serum and the peritoneal lavage of mice. Induces TNF-alpha and IL-6 secretion in mouse RAW264.7 macrophages, mouse bone marrow-derived macrophages, human THP-1 macrophages, human peripheral blood mononuclear cells (PBMCs) and human blood monocyte-derived macrophages. TNF-alpha production in macrophages could not be inhibited by GalNAc, GalN or Gal, indicating that induced cytokine production is separate from its sugar binding activity. Increases intracellular reactive oxygen species levels, expression and phosphorylation of protein kinases PKC alpha/delta, expression of COX-2 and NF-kappaB, and activates the MAPK pathway by increasing the phosphorylation of ERK1/2, JNK1/2 and p38 in mouse RAW264.7 macrophages. Induces endotoxin tolerance in lipopolysaccharide(LPS)-activated macrophages by down-regulating IRAK2 expression, reducing JNK1/2 phosphorylation and NF-kappaB activation. Can slightly increase the bactericidal activity of RAW264.7 macrophages. Has DNA-binding activity. Recognizes pathogen-associated molecular patterns (PAMPs) and binds to LPS from E.coli, but has only little binding to beta-1,3-glucan from E.gracilis and peptidoglycan from S.aureus. Activates secretion of TNF-alpha and IFN-gamma by the human peripheral blood cells (HPBCs). May be involved in innate immunity acting as an antibacterial and antifungal agent involved in the recognition and clearance of pathogens. In Crenomytilus grayanus (Gray mussel), this protein is Galactose-binding lectin.